Consider the following 279-residue polypeptide: Undecaprenyl-diphosphatase (279 aa).

6 helical membrane-spanning segments follow: residues 45–65, 85–105, 113–133, 188–208, 226–246, and 255–275; these read FVEM…IVIY, WQLW…ALPF, FNFM…FIWV, SVAA…YSGL, LILL…IRFL, and FTIF…YWLV.

Belongs to the UppP family.

It is found in the cell membrane. The catalysed reaction is di-trans,octa-cis-undecaprenyl diphosphate + H2O = di-trans,octa-cis-undecaprenyl phosphate + phosphate + H(+). Its function is as follows. Catalyzes the dephosphorylation of undecaprenyl diphosphate (UPP). Confers resistance to bacitracin. This is Undecaprenyl-diphosphatase from Streptococcus agalactiae serotype Ia (strain ATCC 27591 / A909 / CDC SS700).